Consider the following 125-residue polypeptide: MAERPSASRQKAYRRGHRGEWLAAAALMLKGYRILARRHRTRFGEIDLIARRGDLVVFVEVKARRSLMEAMEAIGHESERRIEAAADIWLSRQADYGRLSMRFDMVAVLPWRWPVHVENAFYGRN.

The protein belongs to the UPF0102 family.

The protein is UPF0102 protein mlr4633 of Mesorhizobium japonicum (strain LMG 29417 / CECT 9101 / MAFF 303099) (Mesorhizobium loti (strain MAFF 303099)).